A 167-amino-acid chain; its full sequence is NADH-ubiquinone oxidoreductase chain 6 (167 aa).

5 helical membrane-spanning segments follow: residues 1–21 (MVLM…VASN), 23–43 (SPYF…GMLM), 47–67 (MTFL…VVFA), 86–106 (VFSY…AFVG), and 133–153 (AGGY…LVVL).

Belongs to the complex I subunit 6 family.

The protein resides in the mitochondrion membrane. It carries out the reaction a ubiquinone + NADH + 5 H(+)(in) = a ubiquinol + NAD(+) + 4 H(+)(out). In terms of biological role, core subunit of the mitochondrial membrane respiratory chain NADH dehydrogenase (Complex I) that is believed to belong to the minimal assembly required for catalysis. Complex I functions in the transfer of electrons from NADH to the respiratory chain. The immediate electron acceptor for the enzyme is believed to be ubiquinone. This Polypterus ornatipinnis (Ornate bichir) protein is NADH-ubiquinone oxidoreductase chain 6 (MT-ND6).